Reading from the N-terminus, the 513-residue chain is ATP synthase subunit alpha 1 (513 aa).

169 to 176 (GDRQTGKT) provides a ligand contact to ATP.

It belongs to the ATPase alpha/beta chains family. F-type ATPases have 2 components, CF(1) - the catalytic core - and CF(0) - the membrane proton channel. CF(1) has five subunits: alpha(3), beta(3), gamma(1), delta(1), epsilon(1). CF(0) has three main subunits: a(1), b(2) and c(9-12). The alpha and beta chains form an alternating ring which encloses part of the gamma chain. CF(1) is attached to CF(0) by a central stalk formed by the gamma and epsilon chains, while a peripheral stalk is formed by the delta and b chains.

The protein resides in the cell inner membrane. The catalysed reaction is ATP + H2O + 4 H(+)(in) = ADP + phosphate + 5 H(+)(out). Its function is as follows. Produces ATP from ADP in the presence of a proton gradient across the membrane. The alpha chain is a regulatory subunit. The polypeptide is ATP synthase subunit alpha 1 (Nitrosospira multiformis (strain ATCC 25196 / NCIMB 11849 / C 71)).